Reading from the N-terminus, the 127-residue chain is Phosphoribosyl-AMP cyclohydrolase (127 aa).

A Mg(2+)-binding site is contributed by D78. A Zn(2+)-binding site is contributed by C79. D80 and D82 together coordinate Mg(2+). Residues C95 and C102 each coordinate Zn(2+).

It belongs to the PRA-CH family. As to quaternary structure, homodimer. It depends on Mg(2+) as a cofactor. The cofactor is Zn(2+).

It localises to the cytoplasm. It carries out the reaction 1-(5-phospho-beta-D-ribosyl)-5'-AMP + H2O = 1-(5-phospho-beta-D-ribosyl)-5-[(5-phospho-beta-D-ribosylamino)methylideneamino]imidazole-4-carboxamide. Its pathway is amino-acid biosynthesis; L-histidine biosynthesis; L-histidine from 5-phospho-alpha-D-ribose 1-diphosphate: step 3/9. Functionally, catalyzes the hydrolysis of the adenine ring of phosphoribosyl-AMP. This is Phosphoribosyl-AMP cyclohydrolase from Salinibacter ruber (strain DSM 13855 / M31).